Reading from the N-terminus, the 23-residue chain is U1-ctenitoxin-Co1a (23 aa).

C10 and C20 are oxidised to a cystine.

As to expression, expressed by the venom gland.

The protein localises to the secreted. In terms of biological role, insecticidal neurotoxin that reversibly inhibits the N-methyl-D-aspartate (NMDA)-subtype of ionotropic glutamate receptor (GRIN) and inhibits inactivation of insect sodium channels (Nav). In vivo, is highly toxic to insects. This chain is U1-ctenitoxin-Co1a, found in Ctenus ornatus (Brazilian spider).